We begin with the raw amino-acid sequence, 71 residues long: Conotoxin Lt11.3 (71 aa).

Residues 1 to 26 form the signal peptide; it reads MMFRLTSVGCILLVIAFLNLVGLTNA. Cystine bridges form between Cys-27-Cys-41, Cys-34-Cys-46, Cys-40-Cys-50, and Cys-45-Cys-54. A Proline amide modification is found at Pro-57. Residues 61-71 constitute a propeptide that is removed on maturation; the sequence is TRLQGFFKHRR.

It belongs to the conotoxin I2 superfamily. In terms of tissue distribution, expressed by the venom duct.

The protein resides in the secreted. Functionally, probable neurotoxin. In Conus litteratus (Lettered cone), this protein is Conotoxin Lt11.3.